Reading from the N-terminus, the 341-residue chain is L-threonine 3-dehydrogenase (341 aa).

Cysteine 38 contacts Zn(2+). Catalysis depends on charge relay system residues threonine 40 and histidine 43. Histidine 63, glutamate 64, cysteine 93, cysteine 96, cysteine 99, and cysteine 107 together coordinate Zn(2+). NAD(+)-binding positions include isoleucine 175, aspartate 195, arginine 200, 262 to 264, and 286 to 287; these read LGI and IY.

This sequence belongs to the zinc-containing alcohol dehydrogenase family. As to quaternary structure, homotetramer. Zn(2+) is required as a cofactor.

The protein localises to the cytoplasm. The catalysed reaction is L-threonine + NAD(+) = (2S)-2-amino-3-oxobutanoate + NADH + H(+). It functions in the pathway amino-acid degradation; L-threonine degradation via oxydo-reductase pathway; glycine from L-threonine: step 1/2. Its function is as follows. Catalyzes the NAD(+)-dependent oxidation of L-threonine to 2-amino-3-ketobutyrate. This is L-threonine 3-dehydrogenase from Photorhabdus laumondii subsp. laumondii (strain DSM 15139 / CIP 105565 / TT01) (Photorhabdus luminescens subsp. laumondii).